The sequence spans 615 residues: Proteasome-associated ATPase (615 aa).

The segment covering 1–13 (MSESQRHEAREDG) has biased composition (basic and acidic residues). Residues 1–32 (MSESQRHEAREDGFTTPHESGLSSEDAAELEE) are disordered. Residues 22 to 100 (LSSEDAAELE…LREEVDRLGQ (79 aa)) adopt a coiled-coil conformation. An ATP-binding site is contributed by 302-307 (GCGKTL). The tract at residues 614–615 (YL) is docks into pockets in the proteasome alpha-ring.

The protein belongs to the AAA ATPase family. As to quaternary structure, homohexamer. Assembles into a hexameric ring structure that caps the 20S proteasome core. Strongly interacts with the prokaryotic ubiquitin-like protein Pup through a hydrophobic interface; the interacting region of ARC lies in its N-terminal coiled-coil domain. There is one Pup binding site per ARC hexamer ring. Upon ATP-binding, the C-terminus of ARC interacts with the alpha-rings of the proteasome core, possibly by binding to the intersubunit pockets.

Its pathway is protein degradation; proteasomal Pup-dependent pathway. ATPase which is responsible for recognizing, binding, unfolding and translocation of pupylated proteins into the bacterial 20S proteasome core particle. May be essential for opening the gate of the 20S proteasome via an interaction with its C-terminus, thereby allowing substrate entry and access to the site of proteolysis. Thus, the C-termini of the proteasomal ATPase may function like a 'key in a lock' to induce gate opening and therefore regulate proteolysis. The polypeptide is Proteasome-associated ATPase (Mycobacterium sp. (strain JLS)).